Reading from the N-terminus, the 411-residue chain is Argininosuccinate lyase (411 aa).

Belongs to the lyase 1 family. Argininosuccinate lyase subfamily.

Its subcellular location is the cytoplasm. The enzyme catalyses 2-(N(omega)-L-arginino)succinate = fumarate + L-arginine. It functions in the pathway amino-acid biosynthesis; L-arginine biosynthesis; L-arginine from L-ornithine and carbamoyl phosphate: step 3/3. In Legionella pneumophila (strain Lens), this protein is Argininosuccinate lyase.